Reading from the N-terminus, the 339-residue chain is Exopolyphosphatase 1 (339 aa).

Residues 315–339 are disordered; sequence QTSVRDTRGQEVDRNAANRSRGDKT. Residues 319–339 are compositionally biased toward basic and acidic residues; that stretch reads RDTRGQEVDRNAANRSRGDKT.

It belongs to the GppA/Ppx family. As to quaternary structure, homodimer.

It carries out the reaction [phosphate](n) + H2O = [phosphate](n-1) + phosphate + H(+). Degradation of inorganic polyphosphates (polyP). Releases orthophosphate processively from the ends of the polyP chain. This chain is Exopolyphosphatase 1, found in Mycobacterium leprae (strain TN).